Reading from the N-terminus, the 274-residue chain is 4-hydroxy-tetrahydrodipicolinate reductase (274 aa).

Residue 12-17 (GAAGRM) coordinates NAD(+). Residue arginine 39 coordinates NADP(+). Residues 102–104 (GTT) and 126–129 (SGNM) each bind NAD(+). Histidine 160 serves as the catalytic Proton donor/acceptor. Residue histidine 161 coordinates (S)-2,3,4,5-tetrahydrodipicolinate. Lysine 164 acts as the Proton donor in catalysis. A (S)-2,3,4,5-tetrahydrodipicolinate-binding site is contributed by 170–171 (GT).

It belongs to the DapB family.

It localises to the cytoplasm. It carries out the reaction (S)-2,3,4,5-tetrahydrodipicolinate + NAD(+) + H2O = (2S,4S)-4-hydroxy-2,3,4,5-tetrahydrodipicolinate + NADH + H(+). It catalyses the reaction (S)-2,3,4,5-tetrahydrodipicolinate + NADP(+) + H2O = (2S,4S)-4-hydroxy-2,3,4,5-tetrahydrodipicolinate + NADPH + H(+). Its pathway is amino-acid biosynthesis; L-lysine biosynthesis via DAP pathway; (S)-tetrahydrodipicolinate from L-aspartate: step 4/4. Functionally, catalyzes the conversion of 4-hydroxy-tetrahydrodipicolinate (HTPA) to tetrahydrodipicolinate. The protein is 4-hydroxy-tetrahydrodipicolinate reductase of Rhizobium rhizogenes (strain K84 / ATCC BAA-868) (Agrobacterium radiobacter).